A 234-amino-acid polypeptide reads, in one-letter code: Orotidine 5'-phosphate decarboxylase (234 aa).

Residues Asp10, Lys32, Asp59–Thr68, Thr119, Arg180, Gln189, Gly209, and Arg210 contribute to the substrate site. Lys61 functions as the Proton donor in the catalytic mechanism.

It belongs to the OMP decarboxylase family. Type 1 subfamily. As to quaternary structure, homodimer.

The enzyme catalyses orotidine 5'-phosphate + H(+) = UMP + CO2. It functions in the pathway pyrimidine metabolism; UMP biosynthesis via de novo pathway; UMP from orotate: step 2/2. Its function is as follows. Catalyzes the decarboxylation of orotidine 5'-monophosphate (OMP) to uridine 5'-monophosphate (UMP). In Mannheimia succiniciproducens (strain KCTC 0769BP / MBEL55E), this protein is Orotidine 5'-phosphate decarboxylase.